We begin with the raw amino-acid sequence, 94 residues long: Co-chaperonin GroES (94 aa).

It belongs to the GroES chaperonin family. As to quaternary structure, heptamer of 7 subunits arranged in a ring. Interacts with the chaperonin GroEL.

The protein localises to the cytoplasm. Functionally, together with the chaperonin GroEL, plays an essential role in assisting protein folding. The GroEL-GroES system forms a nano-cage that allows encapsulation of the non-native substrate proteins and provides a physical environment optimized to promote and accelerate protein folding. GroES binds to the apical surface of the GroEL ring, thereby capping the opening of the GroEL channel. This Pediococcus pentosaceus (strain ATCC 25745 / CCUG 21536 / LMG 10740 / 183-1w) protein is Co-chaperonin GroES.